Consider the following 1076-residue polypeptide: Carbamoyl phosphate synthase large chain (1076 aa).

The interval 1–403 (MPKRTDIQSI…SLQKALRGLE (403 aa)) is carboxyphosphate synthetic domain. ATP is bound by residues arginine 129, arginine 169, glycine 175, glycine 176, glutamate 208, leucine 210, glutamate 215, glycine 241, valine 242, histidine 243, glutamine 285, and glutamate 299. In terms of domain architecture, ATP-grasp 1 spans 133–328 (DQAMKRIGLE…IAKIAAKLAV (196 aa)). Mg(2+)-binding residues include glutamine 285, glutamate 299, and asparagine 301. Mn(2+)-binding residues include glutamine 285, glutamate 299, and asparagine 301. Residues 404–553 (TGNDGLDPKV…YSSYEEECEA (150 aa)) are oligomerization domain. Positions 554–935 (EVSDRPKIMV…AFYKAQLGAG (382 aa)) are carbamoyl phosphate synthetic domain. In terms of domain architecture, ATP-grasp 2 spans 678–869 (QHMVDKLGLK…LAQVAARCMA (192 aa)). Positions 714, 753, 755, 760, 785, 786, 787, 788, 828, and 840 each coordinate ATP. Glutamine 828, glutamate 840, and asparagine 842 together coordinate Mg(2+). Mn(2+) is bound by residues glutamine 828, glutamate 840, and asparagine 842. An MGS-like domain is found at 936–1076 (EAIPALEGER…LQELHAGVSQ (141 aa)). The allosteric domain stretch occupies residues 936–1076 (EAIPALEGER…LQELHAGVSQ (141 aa)).

Belongs to the CarB family. As to quaternary structure, composed of two chains; the small (or glutamine) chain promotes the hydrolysis of glutamine to ammonia, which is used by the large (or ammonia) chain to synthesize carbamoyl phosphate. Tetramer of heterodimers (alpha,beta)4. It depends on Mg(2+) as a cofactor. Mn(2+) is required as a cofactor.

It carries out the reaction hydrogencarbonate + L-glutamine + 2 ATP + H2O = carbamoyl phosphate + L-glutamate + 2 ADP + phosphate + 2 H(+). The enzyme catalyses hydrogencarbonate + NH4(+) + 2 ATP = carbamoyl phosphate + 2 ADP + phosphate + 2 H(+). Its pathway is amino-acid biosynthesis; L-arginine biosynthesis; carbamoyl phosphate from bicarbonate: step 1/1. The protein operates within pyrimidine metabolism; UMP biosynthesis via de novo pathway; (S)-dihydroorotate from bicarbonate: step 1/3. Large subunit of the glutamine-dependent carbamoyl phosphate synthetase (CPSase). CPSase catalyzes the formation of carbamoyl phosphate from the ammonia moiety of glutamine, carbonate, and phosphate donated by ATP, constituting the first step of 2 biosynthetic pathways, one leading to arginine and/or urea and the other to pyrimidine nucleotides. The large subunit (synthetase) binds the substrates ammonia (free or transferred from glutamine from the small subunit), hydrogencarbonate and ATP and carries out an ATP-coupled ligase reaction, activating hydrogencarbonate by forming carboxy phosphate which reacts with ammonia to form carbamoyl phosphate. In Halomonas eurihalina, this protein is Carbamoyl phosphate synthase large chain.